We begin with the raw amino-acid sequence, 1212 residues long: Metabotropic glutamate receptor 5 (1212 aa).

The first 20 residues, 1–20 (MVLLLILSVLLLKEDVRGSA), serve as a signal peptide directing secretion. Residues 22-580 (SSERRVVAHM…QYLRWGDPEP (559 aa)) lie on the Extracellular side of the membrane. C57 and C99 are oxidised to a cystine. Y64 is an L-glutamate binding site. A glycan (N-linked (GlcNAc...) asparagine) is linked at N88. Residues S152 and 173–175 (SAT) each bind L-glutamate. A glycan (N-linked (GlcNAc...) asparagine) is linked at N210. Residue Y223 coordinates L-glutamate. 8 disulfides stabilise this stretch: C241/C530, C276/C278, C365/C381, C419/C426, C511/C531, C515/C534, C537/C549, and C552/C565. An L-glutamate-binding site is contributed by D305. 2 N-linked (GlcNAc...) asparagine glycosylation sites follow: N378 and N382. Position 396 (K396) interacts with L-glutamate. Residue N445 is glycosylated (N-linked (GlcNAc...) asparagine). Residues 581 to 603 (IAAVVFACLGLLATLFVTVVFII) form a helical membrane-spanning segment. The Cytoplasmic portion of the chain corresponds to 604–613 (YRDTPVVKSS). A helical transmembrane segment spans residues 614-636 (SRELCYIILAGICLGYLCTFCLI). The Extracellular portion of the chain corresponds to 637 to 644 (AKPKQIYC). Cysteines 644 and 733 form a disulfide. A helical transmembrane segment spans residues 645–667 (YLQRIGIGLSPAMSYSALVTKTN). The Cytoplasmic segment spans residues 668–693 (RIARILAGSKKKICTKKPRFMSACAQ). Residues 694 to 714 (LVIAFILICIQLGIIVALFIM) form a helical membrane-spanning segment. Over 715 to 737 (EPPDIMHDYPSIREVYLICNTTN) the chain is Extracellular. An N-linked (GlcNAc...) asparagine glycan is attached at N734. The helical transmembrane segment at 738 to 759 (LGVVTPLGYNGLLILSCTFYAF) threads the bilayer. Residues 760–772 (KTRNVPANFNEAK) are Cytoplasmic-facing. Residues 773 to 795 (YIAFTMYTTCIIWLAFVPIYFGS) traverse the membrane as a helical segment. Residues 796 to 798 (NYK) lie on the Extracellular side of the membrane. The chain crosses the membrane as a helical span at residues 799–820 (IITMCFSVSLSATVALGCMFVP). The Cytoplasmic segment spans residues 821 to 1212 (KVYIILAKPE…RDYTQSSSSL (392 aa)). Residue S861 is modified to Phosphoserine. Omega-N-methylarginine occurs at positions 869 and 925. Disordered regions lie at residues 937 to 971 (INKK…GGSA), 1010 to 1056 (FPAP…SQGS), and 1132 to 1191 (GAQA…ALCI). The span at 961–971 (LGAGAGAGGSA) shows a compositional bias: gly residues. Phosphoserine is present on residues S1018 and S1020. A compositionally biased stretch (low complexity) spans 1132–1153 (GAQAAGDAARESPAAGPEAAAA). Over residues 1174 to 1185 (DSGSTTPNSPVS) the composition is skewed to polar residues.

This sequence belongs to the G-protein coupled receptor 3 family. The PPXXF motif binds HOMER1, HOMER2 and HOMER3. Interacts with SIAH1, RYR1, RYR2, ITPR1, SHANK1, SHANK3 and TAMALIN. Interacts with NCDN. Isoform 2 interacts with NECAB2. Interacts with CAMK2A.

The protein resides in the cell membrane. Its function is as follows. G-protein coupled receptor for glutamate. Ligand binding causes a conformation change that triggers signaling via guanine nucleotide-binding proteins (G proteins) and modulates the activity of down-stream effectors. Signaling activates a phosphatidylinositol-calcium second messenger system and generates a calcium-activated chloride current. Plays an important role in the regulation of synaptic plasticity and the modulation of the neural network activity. The sequence is that of Metabotropic glutamate receptor 5 (GRM5) from Homo sapiens (Human).